The sequence spans 137 residues: MAVTYQTEGVKMPDIKKRETTEWIKNVAASYGKRLGEIAYIFCSDEKILEVNRQYLQHDYYTDIITFDYCQGDRLSGDLFISLDTIRTNAEQFGAAYDDELHRVIIHGILHLCGINDKGPGEREIMEEAENKALAMR.

Zn(2+)-binding residues include H107, H111, and D117.

It belongs to the endoribonuclease YbeY family. Requires Zn(2+) as cofactor.

The protein resides in the cytoplasm. In terms of biological role, single strand-specific metallo-endoribonuclease involved in late-stage 70S ribosome quality control and in maturation of the 3' terminus of the 16S rRNA. The polypeptide is Endoribonuclease YbeY (Bacteroides thetaiotaomicron (strain ATCC 29148 / DSM 2079 / JCM 5827 / CCUG 10774 / NCTC 10582 / VPI-5482 / E50)).